The following is a 531-amino-acid chain: Putative cysteine ligase BshC (531 aa).

Positions 447-481 form a coiled coil; it reads KAQEKKQTKGLDNLEKRLLKAEKKMHSEKLKKIIE.

Belongs to the BshC family.

In Flavobacterium psychrophilum (strain ATCC 49511 / DSM 21280 / CIP 103535 / JIP02/86), this protein is Putative cysteine ligase BshC.